A 337-amino-acid chain; its full sequence is Phosphate acyltransferase (337 aa).

Belongs to the PlsX family. Homodimer. Probably interacts with PlsY.

It is found in the cytoplasm. The catalysed reaction is a fatty acyl-[ACP] + phosphate = an acyl phosphate + holo-[ACP]. It participates in lipid metabolism; phospholipid metabolism. Functionally, catalyzes the reversible formation of acyl-phosphate (acyl-PO(4)) from acyl-[acyl-carrier-protein] (acyl-ACP). This enzyme utilizes acyl-ACP as fatty acyl donor, but not acyl-CoA. The chain is Phosphate acyltransferase from Latilactobacillus sakei subsp. sakei (strain 23K) (Lactobacillus sakei subsp. sakei).